The sequence spans 295 residues: GTP cyclohydrolase FolE2 (295 aa).

This sequence belongs to the GTP cyclohydrolase IV family.

The catalysed reaction is GTP + H2O = 7,8-dihydroneopterin 3'-triphosphate + formate + H(+). Its pathway is cofactor biosynthesis; 7,8-dihydroneopterin triphosphate biosynthesis; 7,8-dihydroneopterin triphosphate from GTP: step 1/1. In terms of biological role, converts GTP to 7,8-dihydroneopterin triphosphate. This chain is GTP cyclohydrolase FolE2, found in Pseudomonas putida (strain W619).